The following is a 245-amino-acid chain: tRNA (guanine-N(1)-)-methyltransferase (245 aa).

S-adenosyl-L-methionine-binding positions include Gly-114 and 134 to 139 (IGDYIL).

The protein belongs to the RNA methyltransferase TrmD family. In terms of assembly, homodimer.

Its subcellular location is the cytoplasm. The catalysed reaction is guanosine(37) in tRNA + S-adenosyl-L-methionine = N(1)-methylguanosine(37) in tRNA + S-adenosyl-L-homocysteine + H(+). Its function is as follows. Specifically methylates guanosine-37 in various tRNAs. This chain is tRNA (guanine-N(1)-)-methyltransferase, found in Listeria welshimeri serovar 6b (strain ATCC 35897 / DSM 20650 / CCUG 15529 / CIP 8149 / NCTC 11857 / SLCC 5334 / V8).